The primary structure comprises 74 residues: Exodeoxyribonuclease 7 small subunit (74 aa).

This sequence belongs to the XseB family. In terms of assembly, heterooligomer composed of large and small subunits.

It localises to the cytoplasm. The enzyme catalyses Exonucleolytic cleavage in either 5'- to 3'- or 3'- to 5'-direction to yield nucleoside 5'-phosphates.. Its function is as follows. Bidirectionally degrades single-stranded DNA into large acid-insoluble oligonucleotides, which are then degraded further into small acid-soluble oligonucleotides. The sequence is that of Exodeoxyribonuclease 7 small subunit from Neisseria gonorrhoeae (strain ATCC 700825 / FA 1090).